The primary structure comprises 158 residues: NADH-quinone oxidoreductase subunit B (158 aa).

Residues Cys37, Cys38, Cys102, and Cys132 each contribute to the [4Fe-4S] cluster site.

This sequence belongs to the complex I 20 kDa subunit family. As to quaternary structure, NDH-1 is composed of 14 different subunits. Subunits NuoB, C, D, E, F, and G constitute the peripheral sector of the complex. [4Fe-4S] cluster is required as a cofactor.

It is found in the cell inner membrane. The catalysed reaction is a quinone + NADH + 5 H(+)(in) = a quinol + NAD(+) + 4 H(+)(out). NDH-1 shuttles electrons from NADH, via FMN and iron-sulfur (Fe-S) centers, to quinones in the respiratory chain. Couples the redox reaction to proton translocation (for every two electrons transferred, four hydrogen ions are translocated across the cytoplasmic membrane), and thus conserves the redox energy in a proton gradient. This is NADH-quinone oxidoreductase subunit B from Bordetella petrii (strain ATCC BAA-461 / DSM 12804 / CCUG 43448).